The following is a 328-amino-acid chain: MKRPKEPSGSDGESDGPIDVGQEGQLSQMARPLSTPSSSQMQARKKHRGIIEKRRRDRINSSLSELRRLVPTAFEKQGSSKLEKAEVLQMTVDHLKMLHATGGTGFFDARALAVDFRSIGFRECLTEVIRYLGVLEGPSSRADPVRIRLLSHLNSYAAEMEPSPTPTGPLAFPAWPWSFFHSCPGLPALSNQLAILGRVPSPVLPGVSSPAYPIPALRTAPLRRATGIILPARRNVLPSRGASSTRRARPLERPATPVPVAPSSRAARSSHIAPLLQSSSPTPPGPTGSAAYVAVPTPNSSSPGPAGRPAGAMLYHSWVSEITEIGAF.

The disordered stretch occupies residues 1–57 (MKRPKEPSGSDGESDGPIDVGQEGQLSQMARPLSTPSSSQMQARKKHRGIIEKRRRD). Polar residues predominate over residues 24-42 (GQLSQMARPLSTPSSSQMQ). The segment at 42–111 (QARKKHRGII…GGTGFFDARA (70 aa)) is transcriptional repression and interaction with NCOR1 and SIN3A. The bHLH domain occupies 43–98 (ARKKHRGIIEKRRRDRINSSLSELRRLVPTAFEKQGSSKLEKAEVLQMTVDHLKML). An Orange domain is found at 116–153 (FRSIGFRECLTEVIRYLGVLEGPSSRADPVRIRLLSHL). The tract at residues 239–308 (SRGASSTRRA…NSSSPGPAGR (70 aa)) is disordered. A compositionally biased stretch (low complexity) spans 261-270 (APSSRAARSS).

This sequence belongs to the HEY family. In terms of assembly, self-associates. Interacts with GATA4, GATA6, HES1, HEY1 and HEY2. Interacts with HDAC1, NCOR1 and SIN3A.

It localises to the nucleus. In terms of biological role, downstream effector of Notch signaling which may be required for cardiovascular development. Transcriptional repressor which binds preferentially to the canonical E box sequence 5'-CACGTG-3'. Represses transcription by the cardiac transcriptional activators GATA4 and GATA6. The polypeptide is Hairy/enhancer-of-split related with YRPW motif-like protein (HEYL) (Homo sapiens (Human)).